The chain runs to 277 residues: Thymidylate synthase (277 aa).

Arginine 21 is a binding site for dUMP. Histidine 51 is a binding site for (6R)-5,10-methylene-5,6,7,8-tetrahydrofolate. A dUMP-binding site is contributed by 126–127 (RR). Catalysis depends on cysteine 159, which acts as the Nucleophile. DUMP is bound by residues 179-182 (RSAD), asparagine 190, and 220-222 (HLY). A (6R)-5,10-methylene-5,6,7,8-tetrahydrofolate-binding site is contributed by aspartate 182. Serine 276 serves as a coordination point for (6R)-5,10-methylene-5,6,7,8-tetrahydrofolate.

The protein belongs to the thymidylate synthase family. Bacterial-type ThyA subfamily. In terms of assembly, homodimer.

The protein localises to the cytoplasm. It catalyses the reaction dUMP + (6R)-5,10-methylene-5,6,7,8-tetrahydrofolate = 7,8-dihydrofolate + dTMP. Its pathway is pyrimidine metabolism; dTTP biosynthesis. In terms of biological role, catalyzes the reductive methylation of 2'-deoxyuridine-5'-monophosphate (dUMP) to 2'-deoxythymidine-5'-monophosphate (dTMP) while utilizing 5,10-methylenetetrahydrofolate (mTHF) as the methyl donor and reductant in the reaction, yielding dihydrofolate (DHF) as a by-product. This enzymatic reaction provides an intracellular de novo source of dTMP, an essential precursor for DNA biosynthesis. The sequence is that of Thymidylate synthase from Saccharophagus degradans (strain 2-40 / ATCC 43961 / DSM 17024).